The following is a 282-amino-acid chain: Aldo-keto reductase ML1669 (282 aa).

The active-site Proton donor is Tyr57. NADPH-binding residues include Leu197, Val235, Arg237, Ser238, Ala239, Ser246, Asn247, and Arg273.

The protein belongs to the aldo/keto reductase family.

The polypeptide is Aldo-keto reductase ML1669 (Mycobacterium leprae (strain TN)).